Reading from the N-terminus, the 126-residue chain is Small ribosomal subunit protein bS6 (126 aa).

The interval 101-126 (VMMKAKEERSAKREDAAPRAEEAAAE) is disordered. The span at 104–126 (KAKEERSAKREDAAPRAEEAAAE) shows a compositional bias: basic and acidic residues.

It belongs to the bacterial ribosomal protein bS6 family.

Binds together with bS18 to 16S ribosomal RNA. The chain is Small ribosomal subunit protein bS6 from Aliivibrio fischeri (strain ATCC 700601 / ES114) (Vibrio fischeri).